We begin with the raw amino-acid sequence, 240 residues long: MATLFIADLHLCVEEPAITAGFLRFLAGEARKADALYILGDLFEAWIGDDDPNPLHHQMAAAIKAVSDSGVPCYFIHGNRDFLLGKRFARESGMTLLPEEKVLELYGRRVLIMHGDTLCTDDAGYQAFRAKVHKPWLQTLFLALPLFVRKRIAARMRANSKEANSSKSLAIMDVNQNAVVSAMEKHQVQWLIHGHTHRPAVHELIANQQTAFRVVLGAWHTEGSMVKVTADDVELIHFPF.

Mn(2+)-binding residues include D8, H10, D41, N79, and H114. 79-80 serves as a coordination point for substrate; it reads NR. Residues D122, S160, N164, K167, and H195 each contribute to the substrate site. Residues H195 and H197 each coordinate Mn(2+).

This sequence belongs to the LpxH family. Requires Mn(2+) as cofactor.

The protein localises to the cell inner membrane. The catalysed reaction is UDP-2-N,3-O-bis[(3R)-3-hydroxytetradecanoyl]-alpha-D-glucosamine + H2O = 2-N,3-O-bis[(3R)-3-hydroxytetradecanoyl]-alpha-D-glucosaminyl 1-phosphate + UMP + 2 H(+). Its pathway is glycolipid biosynthesis; lipid IV(A) biosynthesis; lipid IV(A) from (3R)-3-hydroxytetradecanoyl-[acyl-carrier-protein] and UDP-N-acetyl-alpha-D-glucosamine: step 4/6. Hydrolyzes the pyrophosphate bond of UDP-2,3-diacylglucosamine to yield 2,3-diacylglucosamine 1-phosphate (lipid X) and UMP by catalyzing the attack of water at the alpha-P atom. Involved in the biosynthesis of lipid A, a phosphorylated glycolipid that anchors the lipopolysaccharide to the outer membrane of the cell. The sequence is that of UDP-2,3-diacylglucosamine hydrolase from Escherichia coli O6:K15:H31 (strain 536 / UPEC).